The following is a 1049-amino-acid chain: Self-sufficient cytochrome P450 monooxygenase CYP505E4 (1049 aa).

Residue cysteine 405 coordinates heme. The tract at residues 462-492 is disordered; that stretch reads ATALSQHNMSAGATSSPGSSAHPAGNKNAQD. The segment covering 471–486 has biased composition (low complexity); it reads SAGATSSPGSSAHPAG. The Flavodoxin-like domain maps to 499–640; sequence ISFFYGSNSG…DLEVWEETNL (142 aa). FMN contacts are provided by residues 505 to 509 and 584 to 616; these read SNSGT and VFGC…TRLT. One can recognise an FAD-binding FR-type domain in the interval 678 to 906; it reads RDLIEGKVTA…RPAKEAFHLP (229 aa).

The protein in the N-terminal section; belongs to the cytochrome P450 family. It depends on FAD as a cofactor. The cofactor is FMN. Heme serves as cofactor.

The catalysed reaction is 2 oxidized [cytochrome P450] + NADPH = 2 reduced [cytochrome P450] + NADP(+) + H(+). The enzyme catalyses an organic molecule + reduced [NADPH--hemoprotein reductase] + O2 = an alcohol + oxidized [NADPH--hemoprotein reductase] + H2O + H(+). It catalyses the reaction dodecanoate + reduced [NADPH--hemoprotein reductase] + O2 = 5-hydroxydodecanoate + oxidized [NADPH--hemoprotein reductase] + H2O + H(+). It carries out the reaction tetradecanoate + reduced [NADPH--hemoprotein reductase] + O2 = 7-hydroxytetradecanoate + oxidized [NADPH--hemoprotein reductase] + H2O + H(+). The catalysed reaction is dodecan-1-ol + reduced [NADPH--hemoprotein reductase] + O2 = 1,5-dodecanediol + oxidized [NADPH--hemoprotein reductase] + H2O + H(+). The enzyme catalyses dodecan-1-ol + reduced [NADPH--hemoprotein reductase] + O2 = 1,4-dodecanediol + oxidized [NADPH--hemoprotein reductase] + H2O + H(+). It catalyses the reaction dodecan-1-ol + reduced [NADPH--hemoprotein reductase] + O2 = 1,6-dodecanediol + oxidized [NADPH--hemoprotein reductase] + H2O + H(+). Functionally, self-sufficient cytochrome P450 monooxygenase that catalyzes the regioselective in-chain hydroxylation of alkanes, fatty alcohols, and fatty acids at the omega-7 position. Performs hydroxylation of C10-C16 n-alkanes and C12 and C14 fatty alcohols; and thereby enables the one step biocatalytic synthesis of rare alcohols such as 5-dodecanol and 7-tetradecanol. Converts 1-dodecanol into 1,5-dodecanediol as major product with very little sub-terminally hydroxylated products with the 1,4-dodecanediol and 1,6-dodecanediol more abundant. Converts dodecanoic acid to 5-hydroxydodecanoic acid which can be further converted into delta-dodecalactone by lactonization of the 5-hydroxy acid at low pH. Also gives sub-terminal hydroxylation of dodecanoic acid with 9-hydroxydodecanoic acid being the second most abundant product. The sequence is that of Self-sufficient cytochrome P450 monooxygenase CYP505E4 from Penicillium freii.